The primary structure comprises 225 residues: Suppressor of cytokine signaling 3 (225 aa).

Positions 22-33 (LKTFSSKSEYQL) are kinase inhibitory region (KIR). The segment at 34 to 45 (VVNAVRKLQESG) is extended SH2 subdomain (ESS). One can recognise an SH2 domain in the interval 46-142 (FYWSAVTGGE…APSFPSPPTE (97 aa)). Over residues 131–142 (PGAPSFPSPPTE) the composition is skewed to pro residues. Residues 131–162 (PGAPSFPSPPTEPSSEVPEQPSAQPLPGSPPR) form a disordered region. The span at 143 to 155 (PSSEVPEQPSAQP) shows a compositional bias: low complexity. The 48-residue stretch at 177–224 (VLSRPLSSNVATLQHLCRKTVNGHLDSYEKVTQLPGPIREFLDQYDAP) folds into the SOCS box domain.

As to quaternary structure, interacts with multiple activated proteins of the tyrosine kinase signaling pathway including IGF1 receptor, insulin receptor and JAK2. Binding to JAK2 is mediated through the KIR and SH2 domains to a phosphorylated tyrosine residue within the JAK2 JH1 domain. Binds specific activated tyrosine residues of the leptin, EPO, IL12, GSCF and gp130 receptors. Interaction with CSNK1E stabilizes SOCS3 protein. Component of the probable ECS(SOCS3) E3 ubiquitin-protein ligase complex which contains CUL5, RNF7/RBX2, Elongin BC complex and SOCS3. Interacts with CUL5, RNF7, ELOB and ELOC. Interacts with CUL2. Interacts with FGFR3. Interacts with INSR. Interacts with BCL10; this interaction may interfere with BCL10-binding with PELI2. Interacts with NOD2 (via CARD domain); the interaction promotes NOD2 degradation. Phosphorylated on tyrosine residues after stimulation by the cytokines, IL-2, EPO or IGF1. In terms of tissue distribution, widely expressed with high expression in heart, placenta, skeletal muscle, peripheral blood leukocytes, fetal and adult lung, and fetal liver and kidney. Lower levels in thymus.

It functions in the pathway protein modification; protein ubiquitination. Its function is as follows. SOCS family proteins form part of a classical negative feedback system that regulates cytokine signal transduction. SOCS3 is involved in negative regulation of cytokines that signal through the JAK/STAT pathway. Inhibits cytokine signal transduction by binding to tyrosine kinase receptors including IL6ST/gp130, LIF, erythropoietin, insulin, IL12, GCSF and leptin receptors. Binding to JAK2 inhibits its kinase activity and regulates IL6 signaling. Suppresses fetal liver erythropoiesis. Regulates onset and maintenance of allergic responses mediated by T-helper type 2 cells. Probable substrate recognition component of a SCF-like ECS (Elongin BC-CUL2/5-SOCS-box protein) E3 ubiquitin-protein ligase complex which mediates the ubiquitination and subsequent proteasomal degradation of target proteins. This is Suppressor of cytokine signaling 3 from Homo sapiens (Human).